Consider the following 911-residue polypeptide: Nitrate reductase [NADH], clone PBNBR1405 (911 aa).

The segment at 1-68 is disordered; that stretch reads MATSVDNRHY…RFDSSDDEDE (68 aa). Positions 49–62 are enriched in basic and acidic residues; that stretch reads KSVDKTTKEDRFDS. Cys-191 lines the Mo-molybdopterin pocket. In terms of domain architecture, Cytochrome b5 heme-binding spans 539–614; it reads SKMYSMSEVR…LEDYRIGELI (76 aa). 2 residues coordinate heme: His-574 and His-597. The region spanning 654 to 766 is the FAD-binding FR-type domain; that stretch reads REKVPVKLIE…KGPLGHIEYQ (113 aa). FAD contacts are provided by residues 706–709, 723–727, Phe-728, Phe-735, 740–742, and Thr-793; these read RAYT, VIKVY, and LMS.

This sequence belongs to the nitrate reductase family. As to quaternary structure, homodimer. FAD serves as cofactor. It depends on heme as a cofactor. The cofactor is Mo-molybdopterin.

It carries out the reaction nitrite + NAD(+) + H2O = nitrate + NADH + H(+). Functionally, nitrate reductase is a key enzyme involved in the first step of nitrate assimilation in plants, fungi and bacteria. The polypeptide is Nitrate reductase [NADH], clone PBNBR1405 (NIA1) (Brassica napus (Rape)).